A 432-amino-acid polypeptide reads, in one-letter code: Lipid-A-disaccharide synthase (432 aa).

The segment covering 1–11 (MTGIGNQTSGI) has biased composition (polar residues). Residues 1–35 (MTGIGNQTSGIETGVHDRAPADGEPTALPISHSPL) are disordered.

Belongs to the LpxB family.

The enzyme catalyses a lipid X + a UDP-2-N,3-O-bis[(3R)-3-hydroxyacyl]-alpha-D-glucosamine = a lipid A disaccharide + UDP + H(+). The protein operates within bacterial outer membrane biogenesis; LPS lipid A biosynthesis. Functionally, condensation of UDP-2,3-diacylglucosamine and 2,3-diacylglucosamine-1-phosphate to form lipid A disaccharide, a precursor of lipid A, a phosphorylated glycolipid that anchors the lipopolysaccharide to the outer membrane of the cell. The polypeptide is Lipid-A-disaccharide synthase (Xanthomonas oryzae pv. oryzae (strain MAFF 311018)).